A 427-amino-acid polypeptide reads, in one-letter code: Tol-Pal system protein TolB (427 aa).

An N-terminal signal peptide occupies residues 1–23 (MKLLKRLVSVFAIVLAVGSNAFA).

The protein belongs to the TolB family. As to quaternary structure, the Tol-Pal system is composed of five core proteins: the inner membrane proteins TolA, TolQ and TolR, the periplasmic protein TolB and the outer membrane protein Pal. They form a network linking the inner and outer membranes and the peptidoglycan layer.

The protein resides in the periplasm. Part of the Tol-Pal system, which plays a role in outer membrane invagination during cell division and is important for maintaining outer membrane integrity. The protein is Tol-Pal system protein TolB of Haemophilus influenzae (strain PittEE).